Here is a 94-residue protein sequence, read N- to C-terminus: Large ribosomal subunit protein bL28 (94 aa).

Positions 1–21 (MARRCEVTGRGTVSGNNVSHS) are disordered. Positions 11–20 (GTVSGNNVSH) are enriched in polar residues.

This sequence belongs to the bacterial ribosomal protein bL28 family.

The protein is Large ribosomal subunit protein bL28 of Leptospira borgpetersenii serovar Hardjo-bovis (strain JB197).